We begin with the raw amino-acid sequence, 381 residues long: Creatine kinase M-type (381 aa).

Positions 11–98 (KLNYKPEEEY…FDPIISDRHG (88 aa)) constitute a Phosphagen kinase N-terminal domain. One can recognise a Phosphagen kinase C-terminal domain in the interval 125-367 (YVLSSRVRTG…KLMVEMEKKL (243 aa)). ATP is bound at residue 128-132 (SSRVR). S164 carries the phosphoserine modification. T166 bears the Phosphothreonine mark. Position 178 is a phosphoserine (S178). At T180 the chain carries Phosphothreonine. H191 lines the ATP pocket. The residue at position 199 (S199) is a Phosphoserine. ATP contacts are provided by R236 and R292. T313 and T322 each carry phosphothreonine. ATP is bound by residues 320–325 (RGTGGV) and D335. S372 is modified (phosphoserine).

Belongs to the ATP:guanido phosphotransferase family. In terms of assembly, dimer of identical or non-identical chains, which can be either B (brain type) or M (muscle type). With MM being the major form in skeletal muscle and myocardium, MB existing in myocardium, and BB existing in many tissues, especially brain.

It is found in the cytoplasm. The catalysed reaction is creatine + ATP = N-phosphocreatine + ADP + H(+). Functionally, reversibly catalyzes the transfer of phosphate between ATP and various phosphogens (e.g. creatine phosphate). Creatine kinase isoenzymes play a central role in energy transduction in tissues with large, fluctuating energy demands, such as skeletal muscle, heart, brain and spermatozoa. This Homo sapiens (Human) protein is Creatine kinase M-type (CKM).